A 330-amino-acid polypeptide reads, in one-letter code: Probable transposase for insertion sequence element ISH11 (330 aa).

It belongs to the transposase 11 family.

Involved in the transposition of the insertion sequence ISH11. This is Probable transposase for insertion sequence element ISH11 from Halobacterium salinarum (strain ATCC 29341 / DSM 671 / R1).